Reading from the N-terminus, the 93-residue chain is Large ribosomal subunit protein uL23c (93 aa).

It belongs to the universal ribosomal protein uL23 family. In terms of assembly, part of the 50S ribosomal subunit.

The protein localises to the plastid. The protein resides in the chloroplast. Functionally, binds to 23S rRNA. This is Large ribosomal subunit protein uL23c (rpl23) from Adiantum capillus-veneris (Maidenhair fern).